We begin with the raw amino-acid sequence, 105 residues long: UPF0473 protein SAG2089 (105 aa).

This sequence belongs to the UPF0473 family.

In Streptococcus agalactiae serotype V (strain ATCC BAA-611 / 2603 V/R), this protein is UPF0473 protein SAG2089.